Reading from the N-terminus, the 1205-residue chain is U2 snRNP component prp10 (1205 aa).

Disordered regions lie at residues 39–58, 122–175, and 202–254; these read QKEA…EGTQ, YADE…GRSY, and GTLK…RRSR. Residues 44–58 show a composition bias toward polar residues; sequence KNSSTNGSVNIEGTQ. The segment covering 130–153 has biased composition (basic and acidic residues); that stretch reads MQERQSKKQIQDRESDYQKQRYDR. HEAT repeat units lie at residues 393 to 429, 431 to 473, 475 to 505, 506 to 540, 541 to 578, 582 to 619, 665 to 702, 745 to 782, 828 to 865, 912 to 949, 954 to 991, 993 to 1024, 1025 to 1061, 1065 to 1102, 1107 to 1142, and 1143 to 1179; these read LRER…DFGA, ALFN…PFTH, ILVV…AKAS, GLAH…ASAL, GVPA…LLGC, PHLK…AATP, HFTR…TDGV, VGSR…SLGV, PYLP…VLKA, PPIR…RGSE, REWM…AIGP, DVLA…AETC, MPFT…YIGE, DYVY…GCVG, DAMI…RNCI, and GVGP…QSAD.

This sequence belongs to the SF3B1 family. Belongs to the 40S cdc5-associated complex (or cwf complex), a spliceosome sub-complex reminiscent of a late-stage spliceosome composed of the U2, U5 and U6 snRNAs and at least brr2, cdc5, cwf2/prp3, cwf3/syf1, cwf4/syf3, cwf5/ecm2, spp42/cwf6, cwf7/spf27, cwf8, cwf9, cwf10, cwf11, cwf12, prp45/cwf13, cwf14, cwf15, cwf16, cwf17, cwf18, cwf19, cwf20, cwf21, cwf22, cwf23, cwf24, cwf25, cwf26, cyp7/cwf27, cwf28, cwf29/ist3, lea1, msl1, prp5/cwf1, prp10, prp12/sap130, prp17, prp22, sap61, sap62, sap114, sap145, slu7, smb1, smd1, smd3, smf1, smg1 and syf2.

It is found in the nucleus. In terms of biological role, contacts pre-mRNA on both sides of the branch site early in spliceosome assembly. The protein is U2 snRNP component prp10 (prp10) of Schizosaccharomyces pombe (strain 972 / ATCC 24843) (Fission yeast).